We begin with the raw amino-acid sequence, 765 residues long: Dipeptidyl peptidase 4 (765 aa).

Over 1 to 6 (MKTPWK) the chain is Cytoplasmic. A helical; Signal-anchor for type II membrane protein transmembrane segment spans residues 7-29 (VLLGLLGLAALITIITVPVVLLN). Residues 30-765 (KGNDAAADSR…HFIKQCFSLP (736 aa)) are Extracellular-facing. N-linked (GlcNAc...) asparagine glycosylation is found at Asn84, Asn91, Asn149, Asn178, Asn228, Asn280, Asn320, Asn330, and Asn331. 3 disulfides stabilise this stretch: Cys384–Cys393, Cys443–Cys446, and Cys453–Cys471. The N-linked (GlcNAc...) asparagine glycan is linked to Asn519. Ser629 serves as the catalytic Charge relay system. Cys648 and Cys761 are disulfide-bonded. Asn684 is a glycosylation site (N-linked (GlcNAc...) asparagine). Catalysis depends on charge relay system residues Asp707 and His739.

This sequence belongs to the peptidase S9B family. DPPIV subfamily. As to quaternary structure, monomer. Homodimer. Heterodimer with Seprase (FAP). Requires homodimerization for optimal dipeptidyl peptidase activity and T-cell costimulation. Found in a membrane raft complex, at least composed of BCL10, CARD11, DPP4 and IKBKB. Associates with collagen. Interacts with PTPRC; the interaction is enhanced in an interleukin-12-dependent manner in activated lymphocytes. Interacts (extracellular domain) with ADA; does not inhibit its dipeptidyl peptidase activity. Interacts with CAV1 (via the N-terminus); the interaction is direct. Interacts (via cytoplasmic tail) with CARD11 (via PDZ domain); its homodimerization is necessary for interaction with CARD11. Interacts with IGF2R; the interaction is direct. Interacts with GPC3. The soluble form (Dipeptidyl peptidase 4 soluble form also named SDPP) derives from the membrane form (Dipeptidyl peptidase 4 membrane form also named MDPP) by proteolytic processing. In terms of processing, N- and O-Glycosylated. Post-translationally, phosphorylated. Mannose 6-phosphate residues in the carbohydrate moiety are necessary for interaction with IGF2R in activated T-cells. Mannose 6-phosphorylation is induced during T-cell activation.

The protein resides in the secreted. It localises to the cell membrane. It is found in the apical cell membrane. The protein localises to the cell projection. Its subcellular location is the invadopodium membrane. The protein resides in the lamellipodium membrane. It localises to the cell junction. It is found in the membrane raft. It catalyses the reaction Release of an N-terminal dipeptide, Xaa-Yaa-|-Zaa-, from a polypeptide, preferentially when Yaa is Pro, provided Zaa is neither Pro nor hydroxyproline.. Inhibited by GPC3 and diprotin A. Its function is as follows. Cell surface glycoprotein receptor involved in the costimulatory signal essential for T-cell receptor (TCR)-mediated T-cell activation. Acts as a positive regulator of T-cell coactivation, by binding at least ADA, CAV1, IGF2R, and PTPRC. Its binding to CAV1 and CARD11 induces T-cell proliferation and NF-kappa-B activation in a T-cell receptor/CD3-dependent manner. Its interaction with ADA also regulates lymphocyte-epithelial cell adhesion. In association with FAP is involved in the pericellular proteolysis of the extracellular matrix (ECM), the migration and invasion of endothelial cells into the ECM. May be involved in the promotion of lymphatic endothelial cells adhesion, migration and tube formation. When overexpressed, enhanced cell proliferation, a process inhibited by GPC3. Also acts as a serine exopeptidase with a dipeptidyl peptidase activity that regulates various physiological processes by cleaving peptides in the circulation, including many chemokines, mitogenic growth factors, neuropeptides and peptide hormones. Removes N-terminal dipeptides sequentially from polypeptides having unsubstituted N-termini provided that the penultimate residue is proline. The protein is Dipeptidyl peptidase 4 (DPP4) of Felis catus (Cat).